We begin with the raw amino-acid sequence, 232 residues long: Octanoyltransferase (232 aa).

A BPL/LPL catalytic domain is found at 32–219 (NIIYDTLILL…SFKVFNFSSY (188 aa)). Substrate-binding positions include 77–84 (RGGDITYH), 140–142 (AIG), and 153–155 (GFA). C171 acts as the Acyl-thioester intermediate in catalysis.

The protein belongs to the LipB family.

The protein localises to the cytoplasm. The catalysed reaction is octanoyl-[ACP] + L-lysyl-[protein] = N(6)-octanoyl-L-lysyl-[protein] + holo-[ACP] + H(+). It participates in protein modification; protein lipoylation via endogenous pathway; protein N(6)-(lipoyl)lysine from octanoyl-[acyl-carrier-protein]: step 1/2. Catalyzes the transfer of endogenously produced octanoic acid from octanoyl-acyl-carrier-protein onto the lipoyl domains of lipoate-dependent enzymes. Lipoyl-ACP can also act as a substrate although octanoyl-ACP is likely to be the physiological substrate. The polypeptide is Octanoyltransferase (Dictyoglomus turgidum (strain DSM 6724 / Z-1310)).